The chain runs to 54 residues: Lectin alpha chain (54 aa).

It belongs to the leguminous lectin family. In terms of assembly, tetramer of two alpha and two beta chains.

The protein is Lectin alpha chain of Lathyrus odoratus (Sweet pea).